We begin with the raw amino-acid sequence, 266 residues long: 5'-nucleotidase SurE (266 aa).

Positions 10, 11, 41, and 97 each coordinate a divalent metal cation.

The protein belongs to the SurE nucleotidase family. A divalent metal cation is required as a cofactor.

It is found in the cytoplasm. The enzyme catalyses a ribonucleoside 5'-phosphate + H2O = a ribonucleoside + phosphate. Functionally, nucleotidase that shows phosphatase activity on nucleoside 5'-monophosphates. The chain is 5'-nucleotidase SurE from Methanocella arvoryzae (strain DSM 22066 / NBRC 105507 / MRE50).